A 394-amino-acid polypeptide reads, in one-letter code: Flavin-dependent monooxygenase, oxygenase subunit HsaA (394 aa).

FMN contacts are provided by residues Trp-84, 118–120 (SSY), 141–143 (WSS), Arg-263, 346–347 (AT), and 368–369 (HA).

The protein belongs to the HpaH/HsaA monooxygenase family. Homotetramer under anaerobic conditions. HsaAB monooxygenase consists of an oxygenase component HsaA and a reductase component HsaB.

It catalyses the reaction 3-hydroxy-9,10-secoandrosta-1,3,5(10)-triene-9,17-dione + FMNH2 + O2 = 3,4-dihydroxy-9,10-secoandrosta-1,3,5(10)-triene-9,17-dione + FMN + H2O + H(+). It participates in lipid metabolism; steroid biosynthesis. In terms of biological role, catalyzes the o-hydroxylation of 3-hydroxy-9,10-secoandrosta-1,3,5(10)-triene-9,17-dione (3-HSA) to 3,4-dihydroxy-9,10-secoandrosta-1,3,5(10)-triene-9,17-dione (3,4-DHSA) in the catabolism of cholesterol. This chain is Flavin-dependent monooxygenase, oxygenase subunit HsaA, found in Mycobacterium tuberculosis (strain CDC 1551 / Oshkosh).